A 530-amino-acid chain; its full sequence is Growth-regulating factor 1 (530 aa).

Residues 1–41 (MDLGVRVSGHETVSSPGQTELGSGFSNKQERSGFDGEDCWR) are disordered. Positions 11-27 (ETVSSPGQTELGSGFSN) are enriched in polar residues. Positions 28–41 (KQERSGFDGEDCWR) are enriched in basic and acidic residues. The 36-residue stretch at 133–168 (PFSLTQWAELEQQALIYKYITANVPVPSSLLLSLKK) folds into the QLQ domain. The 45-residue stretch at 196–240 (DPEPGRCRRTDGKKWRCSRDAVPDQKYCERHINRGRHRSRKPVEG) folds into the WRC domain. 2 short sequence motifs (bipartite nuclear localization signal) span residues 201 to 211 (RCRRTDGKKWR) and 229 to 236 (RGRHRSRK). Disordered regions lie at residues 223–250 (CERHINRGRHRSRKPVEGQNGHNTNAAA) and 485–530 (STFG…APSL). Positions 485 to 508 (STFGSLSNSSSASSTIIGDNNNKN) are enriched in low complexity. Positions 519-530 (TLMNTSATAPSL) are enriched in polar residues.

Belongs to the GRF family. Interacts with GIF1 and GIF2. As to expression, strongly expressed in actively growing and developing tissues, such as roots, upper stems, and shoot tips containing the shoot apical meristem (SAM) and flower buds. Also expressed in mature flowers, but weakly expressed in mature stems and leaves.

Its subcellular location is the nucleus. Transcription activator that plays a role in the regulation of cell expansion in leaf and cotyledons tissues. Component of a network formed by miR396, the GRFs and their interacting factors (GIFs) acting in the regulation of meristem function, at least partially through the control of cell proliferation. microRNA396-GRF1/GRF3 regulatory module acts as a developmental regulator in the reprogramming of root cells during cyst nematode infection, leading to the formation of the syncytium. The polypeptide is Growth-regulating factor 1 (GRF1) (Arabidopsis thaliana (Mouse-ear cress)).